Consider the following 481-residue polypeptide: Cobyric acid synthase (481 aa).

One can recognise a GATase cobBQ-type domain in the interval 249–436; the sequence is GLHIVCLRLS…LHGMFRDDAF (188 aa). Catalysis depends on cysteine 331, which acts as the Nucleophile. The active site involves histidine 428.

The protein belongs to the CobB/CobQ family. CobQ subfamily.

It participates in cofactor biosynthesis; adenosylcobalamin biosynthesis. In terms of biological role, catalyzes amidations at positions B, D, E, and G on adenosylcobyrinic A,C-diamide. NH(2) groups are provided by glutamine, and one molecule of ATP is hydrogenolyzed for each amidation. This Jannaschia sp. (strain CCS1) protein is Cobyric acid synthase.